The primary structure comprises 127 residues: Small ribosomal subunit protein uS11c (127 aa).

Belongs to the universal ribosomal protein uS11 family. As to quaternary structure, part of the 30S ribosomal subunit.

It is found in the plastid. The protein localises to the chloroplast. This chain is Small ribosomal subunit protein uS11c, found in Heterosigma akashiwo (strain NIES-293 / 8280G21-1).